The chain runs to 119 residues: Large ribosomal subunit protein uL22 (119 aa).

This sequence belongs to the universal ribosomal protein uL22 family. Part of the 50S ribosomal subunit.

Functionally, this protein binds specifically to 23S rRNA; its binding is stimulated by other ribosomal proteins, e.g. L4, L17, and L20. It is important during the early stages of 50S assembly. It makes multiple contacts with different domains of the 23S rRNA in the assembled 50S subunit and ribosome. The globular domain of the protein is located near the polypeptide exit tunnel on the outside of the subunit, while an extended beta-hairpin is found that lines the wall of the exit tunnel in the center of the 70S ribosome. This is Large ribosomal subunit protein uL22 from Rickettsia rickettsii (strain Iowa).